The chain runs to 361 residues: D-alanine--D-alanine ligase (361 aa).

In terms of domain architecture, ATP-grasp spans 134–344; it reads KILAQRAGVP…YTDLITKLID (211 aa). 169-224 is an ATP binding site; the sequence is ASQLGSDLFVKPSNQGSSVGVSHVTNEKEYKVALAEAFKYDDKVLVEETVHGTEVE. Residues aspartate 297, glutamate 311, and asparagine 313 each contribute to the Mg(2+) site.

Belongs to the D-alanine--D-alanine ligase family. Requires Mg(2+) as cofactor. Mn(2+) is required as a cofactor.

Its subcellular location is the cytoplasm. The enzyme catalyses 2 D-alanine + ATP = D-alanyl-D-alanine + ADP + phosphate + H(+). It functions in the pathway cell wall biogenesis; peptidoglycan biosynthesis. Its function is as follows. Cell wall formation. The polypeptide is D-alanine--D-alanine ligase (Lactobacillus gasseri (strain ATCC 33323 / DSM 20243 / BCRC 14619 / CIP 102991 / JCM 1131 / KCTC 3163 / NCIMB 11718 / NCTC 13722 / AM63)).